The chain runs to 446 residues: tRNA wybutosine-synthesizing protein 2 homolog (446 aa).

S-adenosyl-L-methionine-binding positions include serine 208, lysine 215, glutamate 255, and 283 to 284 (DN).

This sequence belongs to the class I-like SAM-binding methyltransferase superfamily. TRM5/TYW2 family.

It catalyses the reaction 4-demethylwyosine(37) in tRNA(Phe) + S-adenosyl-L-methionine = 4-demethyl-7-[(3S)-3-amino-3-carboxypropyl]wyosine(37) in tRNA(Phe) + S-methyl-5'-thioadenosine + H(+). It participates in tRNA modification; wybutosine-tRNA(Phe) biosynthesis. Its function is as follows. S-adenosyl-L-methionine-dependent transferase that acts as a component of the wybutosine biosynthesis pathway. Wybutosine is a hyper modified guanosine with a tricyclic base found at the 3'-position adjacent to the anticodon of eukaryotic phenylalanine tRNA. Catalyzes the transfer of the alpha-amino-alpha-carboxypropyl (acp) group from S-adenosyl-L-methionine to the C-7 position of 4-demethylwyosine (imG-14) to produce wybutosine-86. The sequence is that of tRNA wybutosine-synthesizing protein 2 homolog (Trmt12) from Mus musculus (Mouse).